Reading from the N-terminus, the 1430-residue chain is Target of rapamycin complex 2 subunit TSC11 (1430 aa).

A disordered region spans residues Met-1–Asn-62. Polar residues-rich tracts occupy residues Ala-7–Leu-26 and Asn-35–Lys-44. Ser-19 is subject to Phosphoserine. A compositionally biased stretch (low complexity) spans Asn-45–Glu-57. Phosphoserine occurs at positions 81, 84, 87, and 141. Positions Ala-91–Gln-180 form a coiled coil. The disordered stretch occupies residues Asp-182–Leu-285. Polar residues predominate over residues Thr-233–Ser-265. Positions Ser-995–His-1100 constitute an N-terminal Ras-GEF domain.

Belongs to the RICTOR family. The target of rapamycin complex 2 (TORC2) is composed of at least AVO1, AVO2, BIT61, LST8, TOR2 and TSC11. TORC2 forms a homodimer. Contrary to TORC1, TORC2 does not bind to and is not sensitive to FKBP-rapamycin. TSC11 binds to the N-terminal HEAT repeat region in TOR2 and is required for TORC2 integrity by tethering AVO1 and AVO2 to the complex. Post-translationally, phosphorylated by TOR2; when part of TORC2.

It localises to the cell membrane. It is found in the vacuole membrane. Its function is as follows. Essential component of TORC2, which regulates cell cycle-dependent polarization of the actin-cytoskeleton and cell wall integrity. TORC2 controls polarity of the actin cytoskeleton, which is required for orienting the secretory pathway toward discrete growth sites, via the RHO1/PKC1/MAPK cell integrity pathway. TSC11 may exert its functions through two distinct mechanisms, one mediated by AVO1 and the other mediated by AVO2 and SLM1. This is Target of rapamycin complex 2 subunit TSC11 (TSC11) from Saccharomyces cerevisiae (strain ATCC 204508 / S288c) (Baker's yeast).